The primary structure comprises 173 residues: NADH-ubiquinone oxidoreductase chain 6 (173 aa).

5 consecutive transmembrane segments (helical) span residues 1-21 (MTYFVLFLGLCFVLGGLAVAS), 27-47 (YGVVGLVVASVAGCGWLLSLG), 48-68 (VSFVSLVLFMVYLGGMLVVFV), 87-107 (VVGYGAGFVLVLVVGGVVGGL), and 139-159 (CGVGMFLVAGWGLLLTLFVVL).

It belongs to the complex I subunit 6 family.

The protein localises to the mitochondrion membrane. The enzyme catalyses a ubiquinone + NADH + 5 H(+)(in) = a ubiquinol + NAD(+) + 4 H(+)(out). Functionally, core subunit of the mitochondrial membrane respiratory chain NADH dehydrogenase (Complex I) that is believed to belong to the minimal assembly required for catalysis. Complex I functions in the transfer of electrons from NADH to the respiratory chain. The immediate electron acceptor for the enzyme is believed to be ubiquinone. The polypeptide is NADH-ubiquinone oxidoreductase chain 6 (MT-ND6) (Larus canus (Common gull)).